Consider the following 95-residue polypeptide: Large ribosomal subunit protein eL31 (95 aa).

It belongs to the eukaryotic ribosomal protein eL31 family.

The protein is Large ribosomal subunit protein eL31 (rpl31e) of Pyrococcus horikoshii (strain ATCC 700860 / DSM 12428 / JCM 9974 / NBRC 100139 / OT-3).